The sequence spans 252 residues: 3-deoxy-manno-octulosonate cytidylyltransferase (252 aa).

This sequence belongs to the KdsB family.

The protein localises to the cytoplasm. The enzyme catalyses 3-deoxy-alpha-D-manno-oct-2-ulosonate + CTP = CMP-3-deoxy-beta-D-manno-octulosonate + diphosphate. It functions in the pathway nucleotide-sugar biosynthesis; CMP-3-deoxy-D-manno-octulosonate biosynthesis; CMP-3-deoxy-D-manno-octulosonate from 3-deoxy-D-manno-octulosonate and CTP: step 1/1. The protein operates within bacterial outer membrane biogenesis; lipopolysaccharide biosynthesis. Its function is as follows. Activates KDO (a required 8-carbon sugar) for incorporation into bacterial lipopolysaccharide in Gram-negative bacteria. This Vibrio cholerae serotype O1 (strain ATCC 39315 / El Tor Inaba N16961) protein is 3-deoxy-manno-octulosonate cytidylyltransferase.